A 239-amino-acid polypeptide reads, in one-letter code: Sugar fermentation stimulation protein homolog (239 aa).

This sequence belongs to the SfsA family.

The chain is Sugar fermentation stimulation protein homolog from Mannheimia succiniciproducens (strain KCTC 0769BP / MBEL55E).